A 380-amino-acid chain; its full sequence is Lipid-A-disaccharide synthase (380 aa).

The protein belongs to the LpxB family.

The enzyme catalyses a lipid X + a UDP-2-N,3-O-bis[(3R)-3-hydroxyacyl]-alpha-D-glucosamine = a lipid A disaccharide + UDP + H(+). The protein operates within bacterial outer membrane biogenesis; LPS lipid A biosynthesis. Its function is as follows. Condensation of UDP-2,3-diacylglucosamine and 2,3-diacylglucosamine-1-phosphate to form lipid A disaccharide, a precursor of lipid A, a phosphorylated glycolipid that anchors the lipopolysaccharide to the outer membrane of the cell. In Photobacterium profundum (strain SS9), this protein is Lipid-A-disaccharide synthase.